We begin with the raw amino-acid sequence, 378 residues long: Probable protein phosphatase 2C 55 (378 aa).

Disordered regions lie at residues 1–59 and 79–115; these read MRRH…ASKG and EGEASSRGPAASRGGRRGRNSKRQPPRSRFDGDGVGC. Residues 7–26 are compositionally biased toward low complexity; the sequence is LGLLRRAAASSTSAASSRAG. Residues 92-104 show a composition bias toward basic residues; it reads GGRRGRNSKRQPP. Residues 122 to 369 enclose the PPM-type phosphatase domain; it reads SWGYSSFQGR…DNVTCIVLQF (248 aa). Mn(2+) contacts are provided by aspartate 158, glycine 159, aspartate 321, and aspartate 360.

This sequence belongs to the PP2C family. Mg(2+) is required as a cofactor. The cofactor is Mn(2+).

The enzyme catalyses O-phospho-L-seryl-[protein] + H2O = L-seryl-[protein] + phosphate. It catalyses the reaction O-phospho-L-threonyl-[protein] + H2O = L-threonyl-[protein] + phosphate. This chain is Probable protein phosphatase 2C 55, found in Oryza sativa subsp. japonica (Rice).